Reading from the N-terminus, the 392-residue chain is Glucan endo-1,3-beta-glucosidase 14 (392 aa).

Positions 1–21 (MATHSLSFFFRVLLLLFLTLS) are cleaved as a signal peptide. Asparagine 54 and asparagine 89 each carry an N-linked (GlcNAc...) asparagine glycan. The active-site Proton donor is the glutamate 122. Residue glutamate 267 is the Nucleophile of the active site. Serine 359 carries GPI-anchor amidated serine lipidation. A propeptide spans 360-392 (RATTIKILNLWRVVMGLAVAWFILDMGDKMRMR) (removed in mature form).

The protein belongs to the glycosyl hydrolase 17 family.

The protein localises to the cell membrane. It is found in the secreted. Its subcellular location is the cell wall. The protein resides in the cytoplasm. It catalyses the reaction Hydrolysis of (1-&gt;3)-beta-D-glucosidic linkages in (1-&gt;3)-beta-D-glucans.. The protein is Glucan endo-1,3-beta-glucosidase 14 of Arabidopsis thaliana (Mouse-ear cress).